We begin with the raw amino-acid sequence, 318 residues long: Ribokinase (318 aa).

Substrate is bound by residues asparagine 11 to aspartate 13, glycine 41 to asparagine 45, and glutamate 146. Residues asparagine 190 and threonine 229–glycine 234 each bind ATP. Residues aspartate 256 and threonine 258 each coordinate K(+). Glycine 261 to aspartate 262 lines the ATP pocket. Aspartate 262 is a substrate binding site. Aspartate 262 functions as the Proton acceptor in the catalytic mechanism. Residues threonine 292, arginine 295, glycine 297, and serine 301 each contribute to the K(+) site.

Belongs to the carbohydrate kinase PfkB family. Ribokinase subfamily. As to quaternary structure, homodimer. Mg(2+) is required as a cofactor.

It localises to the cytoplasm. Its subcellular location is the nucleus. It catalyses the reaction D-ribose + ATP = D-ribose 5-phosphate + ADP + H(+). It functions in the pathway carbohydrate metabolism; D-ribose degradation; D-ribose 5-phosphate from beta-D-ribopyranose: step 2/2. Its activity is regulated as follows. Activated by a monovalent cation that binds near, but not in, the active site. The most likely occupant of the site in vivo is potassium. Ion binding induces a conformational change that may alter substrate affinity. Catalyzes the phosphorylation of ribose at O-5 in a reaction requiring ATP and magnesium. The resulting D-ribose-5-phosphate can then be used either for sythesis of nucleotides, histidine, and tryptophan, or as a component of the pentose phosphate pathway. The protein is Ribokinase of Schizosaccharomyces pombe (strain 972 / ATCC 24843) (Fission yeast).